A 255-amino-acid polypeptide reads, in one-letter code: 4-hydroxy-tetrahydrodipicolinate reductase (255 aa).

Residues 9–14 (GFKGRM), 89–91 (GTT), and 115–118 (APNF) each bind NAD(+). Residue His145 is the Proton donor/acceptor of the active site. Position 146 (His146) interacts with (S)-2,3,4,5-tetrahydrodipicolinate. The active-site Proton donor is the Lys149. Residue 155 to 156 (GT) coordinates (S)-2,3,4,5-tetrahydrodipicolinate.

Belongs to the DapB family.

It is found in the cytoplasm. It carries out the reaction (S)-2,3,4,5-tetrahydrodipicolinate + NAD(+) + H2O = (2S,4S)-4-hydroxy-2,3,4,5-tetrahydrodipicolinate + NADH + H(+). The catalysed reaction is (S)-2,3,4,5-tetrahydrodipicolinate + NADP(+) + H2O = (2S,4S)-4-hydroxy-2,3,4,5-tetrahydrodipicolinate + NADPH + H(+). It functions in the pathway amino-acid biosynthesis; L-lysine biosynthesis via DAP pathway; (S)-tetrahydrodipicolinate from L-aspartate: step 4/4. Functionally, catalyzes the conversion of 4-hydroxy-tetrahydrodipicolinate (HTPA) to tetrahydrodipicolinate. This is 4-hydroxy-tetrahydrodipicolinate reductase from Streptococcus thermophilus (strain CNRZ 1066).